Here is a 183-residue protein sequence, read N- to C-terminus: Ribosome rescue factor SmrB (183 aa).

The 76-residue stretch at 98–173 folds into the Smr domain; that stretch reads LDLHGLTQMQ…GDAALLVLIE (76 aa).

Belongs to the SmrB family. As to quaternary structure, associates with collided ribosomes, but not with correctly translating polysomes.

In terms of biological role, acts as a ribosome collision sensor. Detects stalled/collided disomes (pairs of ribosomes where the leading ribosome is stalled and a second ribosome has collided with it) and endonucleolytically cleaves mRNA at the 5' boundary of the stalled ribosome. Stalled/collided disomes form a new interface (primarily via the 30S subunits) that binds SmrB. Cleaved mRNA becomes available for tmRNA ligation, leading to ribosomal subunit dissociation and rescue of stalled ribosomes. This is Ribosome rescue factor SmrB from Enterobacter sp. (strain 638).